A 931-amino-acid polypeptide reads, in one-letter code: Valine--tRNA ligase (931 aa).

Positions 42–52 match the 'HIGH' region motif; it reads PNVTGSLHMGH. The short motif at 523–527 is the 'KMSKS' region element; it reads KMSKS. Lysine 526 serves as a coordination point for ATP. Positions 859 to 931 form a coiled coil; it reads MAGLIDKEAE…EEQLEKIKYL (73 aa).

It belongs to the class-I aminoacyl-tRNA synthetase family. ValS type 1 subfamily. Monomer.

Its subcellular location is the cytoplasm. The enzyme catalyses tRNA(Val) + L-valine + ATP = L-valyl-tRNA(Val) + AMP + diphosphate. Catalyzes the attachment of valine to tRNA(Val). As ValRS can inadvertently accommodate and process structurally similar amino acids such as threonine, to avoid such errors, it has a 'posttransfer' editing activity that hydrolyzes mischarged Thr-tRNA(Val) in a tRNA-dependent manner. This Alcanivorax borkumensis (strain ATCC 700651 / DSM 11573 / NCIMB 13689 / SK2) protein is Valine--tRNA ligase.